The primary structure comprises 326 residues: Glycolipid sulfotransferase MRA_1383 (326 aa).

40–45 (KSGLTW) is a 3'-phosphoadenylyl sulfate binding site. Histidine 97 (proton acceptor) is an active-site residue. Residue 116-124 (RDPRDAAVS) coordinates 3'-phosphoadenylyl sulfate.

This sequence belongs to the sulfotransferase 1 family.

In terms of biological role, involved in the synthesis of cell wall sulfolipids. The chain is Glycolipid sulfotransferase MRA_1383 from Mycobacterium tuberculosis (strain ATCC 25177 / H37Ra).